The primary structure comprises 274 residues: Protein FRG1 homolog (274 aa).

Residues 20 to 36 carry the Nuclear localization signal motif; sequence KKNLFKVGKEKKKKNKD. Residues 27–46 are disordered; sequence GKEKKKKNKDDKEKIDPDTV. Over residues 34–43 the composition is skewed to basic and acidic residues; it reads NKDDKEKIDP. The short motif at 252–268 is the Bipartite nuclear localization signal element; that stretch reads QADGSAHELLLDRRMKM.

The protein belongs to the FRG1 family.

It is found in the nucleus. The protein localises to the cajal body. It localises to the nucleolus. Its subcellular location is the cytoplasm. Binds to mRNA in a sequence-independent manner. May play a role in regulation of pre-mRNA splicing or in the assembly of rRNA into ribosomal subunits. May be involved in mRNA transport. May be involved in epigenetic regulation of muscle differentiation through regulation of activity of the histone-lysine N-methyltransferase KMT5B. The sequence is that of Protein FRG1 homolog (frg-1) from Caenorhabditis elegans.